The sequence spans 382 residues: Mannitol-1-phosphate 5-dehydrogenase (382 aa).

3-14 (ALHFGAGNIGRG) is an NAD(+) binding site. N6-acetyllysine is present on K269.

The protein belongs to the mannitol dehydrogenase family.

It catalyses the reaction D-mannitol 1-phosphate + NAD(+) = beta-D-fructose 6-phosphate + NADH + H(+). The protein is Mannitol-1-phosphate 5-dehydrogenase of Escherichia coli O45:K1 (strain S88 / ExPEC).